Consider the following 347-residue polypeptide: Gas vesicle ATPase GvpN (347 aa).

A disordered region spans residues M1–T50. Positions S18–Q42 are enriched in basic and acidic residues. Residue G91–T98 coordinates ATP.

Belongs to the CbbQ/NirQ/NorQ/GpvN family. In terms of assembly, forms homodimers, a GvpN-GvpO heterodimer, interacts with GvpC and GvpL, might interact with GvpA.

The protein localises to the gas vesicle. It is found in the cytoplasm. The catalysed reaction is ATP + H2O = ADP + phosphate + H(+). Functionally, an ATPase that functions in gas vesicle formation. A minor component of the gas vesicle, also found in soluble extracts. Gas vesicles are hollow, gas filled proteinaceous nanostructures found in some microorganisms. They allow positioning of halobacteria at the optimal depth for growth in the poorly aerated, shallow brine pools of their habitat. Expression of a 9.5 kb mc-vac DNA fragment containing 2 divergently transcribed regions (gvpD-gvpE-gvpF-gvpG-gvpH-gvpI-gvpJ-gvpK-gvpL-gvpM and gvpA-gvpC-gvpN-gvpO) allows H.volcanii to produce gas vesicles. The protein is Gas vesicle ATPase GvpN of Haloferax mediterranei (strain ATCC 33500 / DSM 1411 / JCM 8866 / NBRC 14739 / NCIMB 2177 / R-4) (Halobacterium mediterranei).